The primary structure comprises 422 residues: UDP-N-acetylglucosamine 1-carboxyvinyltransferase (422 aa).

22 to 23 (KN) contributes to the phosphoenolpyruvate binding site. Residue Arg-93 participates in UDP-N-acetyl-alpha-D-glucosamine binding. The active-site Proton donor is Cys-117. 2-(S-cysteinyl)pyruvic acid O-phosphothioketal is present on Cys-117. Residues 122 to 126 (RPVDL), Asp-308, and Leu-330 contribute to the UDP-N-acetyl-alpha-D-glucosamine site.

This sequence belongs to the EPSP synthase family. MurA subfamily.

It is found in the cytoplasm. The catalysed reaction is phosphoenolpyruvate + UDP-N-acetyl-alpha-D-glucosamine = UDP-N-acetyl-3-O-(1-carboxyvinyl)-alpha-D-glucosamine + phosphate. The protein operates within cell wall biogenesis; peptidoglycan biosynthesis. Cell wall formation. Adds enolpyruvyl to UDP-N-acetylglucosamine. The protein is UDP-N-acetylglucosamine 1-carboxyvinyltransferase of Helicobacter pylori (strain J99 / ATCC 700824) (Campylobacter pylori J99).